Here is a 268-residue protein sequence, read N- to C-terminus: Ribosomal RNA small subunit methyltransferase A (268 aa).

6 residues coordinate S-adenosyl-L-methionine: Asn-16, Leu-18, Gly-43, Glu-64, Asp-89, and Asn-110.

This sequence belongs to the class I-like SAM-binding methyltransferase superfamily. rRNA adenine N(6)-methyltransferase family. RsmA subfamily.

It is found in the cytoplasm. It carries out the reaction adenosine(1518)/adenosine(1519) in 16S rRNA + 4 S-adenosyl-L-methionine = N(6)-dimethyladenosine(1518)/N(6)-dimethyladenosine(1519) in 16S rRNA + 4 S-adenosyl-L-homocysteine + 4 H(+). Specifically dimethylates two adjacent adenosines (A1518 and A1519) in the loop of a conserved hairpin near the 3'-end of 16S rRNA in the 30S particle. May play a critical role in biogenesis of 30S subunits. This is Ribosomal RNA small subunit methyltransferase A from Pseudomonas savastanoi pv. phaseolicola (strain 1448A / Race 6) (Pseudomonas syringae pv. phaseolicola (strain 1448A / Race 6)).